The sequence spans 335 residues: Glyceraldehyde-3-phosphate dehydrogenase (335 aa).

NAD(+) contacts are provided by residues 15-16 and Asp-37; that span reads RI. D-glyceraldehyde 3-phosphate contacts are provided by residues 155–157, Thr-186, Arg-201, 214–215, and Arg-237; these read SCT and TG. Cys-156 serves as the catalytic Nucleophile. NAD(+) is bound by residues Gln-301 and Asn-318.

This sequence belongs to the glyceraldehyde-3-phosphate dehydrogenase family. Homotetramer.

It localises to the cytoplasm. The enzyme catalyses D-glyceraldehyde 3-phosphate + phosphate + NADP(+) = (2R)-3-phospho-glyceroyl phosphate + NADPH + H(+). It catalyses the reaction D-glyceraldehyde 3-phosphate + phosphate + NAD(+) = (2R)-3-phospho-glyceroyl phosphate + NADH + H(+). It participates in carbohydrate degradation; glycolysis; pyruvate from D-glyceraldehyde 3-phosphate: step 1/5. The sequence is that of Glyceraldehyde-3-phosphate dehydrogenase (gap) from Haloarcula vallismortis (Halobacterium vallismortis).